The following is a 124-amino-acid chain: Small ribosomal subunit protein uS12 (124 aa).

The residue at position 89 (Asp89) is a 3-methylthioaspartic acid.

The protein belongs to the universal ribosomal protein uS12 family. In terms of assembly, part of the 30S ribosomal subunit. Contacts proteins S8 and S17. May interact with IF1 in the 30S initiation complex.

Functionally, with S4 and S5 plays an important role in translational accuracy. Its function is as follows. Interacts with and stabilizes bases of the 16S rRNA that are involved in tRNA selection in the A site and with the mRNA backbone. Located at the interface of the 30S and 50S subunits, it traverses the body of the 30S subunit contacting proteins on the other side and probably holding the rRNA structure together. The combined cluster of proteins S8, S12 and S17 appears to hold together the shoulder and platform of the 30S subunit. The polypeptide is Small ribosomal subunit protein uS12 (Sodalis glossinidius (strain morsitans)).